The sequence spans 493 residues: Exosome complex component Rrp41 (493 aa).

Disordered stretches follow at residues 244-264 (VSEETAPEKGAEKEVLEPSPV) and 291-493 (LASE…EKDE). Positions 249-259 (APEKGAEKEVL) are enriched in basic and acidic residues. Positions 297-377 (PDFEDELEEE…ALEEETELEA (81 aa)) are enriched in acidic residues. The segment covering 383–400 (PELKEFDEIEARLEKEDA) has biased composition (basic and acidic residues). Residues 401–471 (SIEAEEEIEP…EAEEEPEEEK (71 aa)) are compositionally biased toward acidic residues. Residues 472–493 (SEGPWKVVKDPSEAGTRGEKDE) are compositionally biased toward basic and acidic residues.

The protein belongs to the RNase PH family. Rrp41 subfamily. In terms of assembly, component of the archaeal exosome complex. Forms a hexameric ring-like arrangement composed of 3 Rrp41-Rrp42 heterodimers. The hexameric ring associates with a trimer of Rrp4 and/or Csl4 subunits.

It is found in the cytoplasm. Catalytic component of the exosome, which is a complex involved in RNA degradation. Has 3'-&gt;5' exoribonuclease activity. Can also synthesize heteromeric RNA-tails. The sequence is that of Exosome complex component Rrp41 from Methanosarcina mazei (strain ATCC BAA-159 / DSM 3647 / Goe1 / Go1 / JCM 11833 / OCM 88) (Methanosarcina frisia).